The chain runs to 61 residues: Small ribosomal subunit protein uS14B (61 aa).

Zn(2+) is bound by residues C24, C27, C40, and C43.

Belongs to the universal ribosomal protein uS14 family. Zinc-binding uS14 subfamily. In terms of assembly, part of the 30S ribosomal subunit. Contacts proteins S3 and S10. Zn(2+) serves as cofactor.

Binds 16S rRNA, required for the assembly of 30S particles and may also be responsible for determining the conformation of the 16S rRNA at the A site. In Mycolicibacterium smegmatis (strain ATCC 700084 / mc(2)155) (Mycobacterium smegmatis), this protein is Small ribosomal subunit protein uS14B.